We begin with the raw amino-acid sequence, 176 residues long: MGSEQNDSTSFTQSQASEPKLCVKGCGFFGSPSNMDLCSKCYRGICAEEAQTAVAKAAVEKSFKPSPPRSLFIAEPPAVVVEPKPEKAAVVVVSAEPSSSAVPEANEPSRPARTNRCLCCNKKVGIMGFKCKCGSTFCGEHRYPETHDCSFDFKEVGRGEIAKANPVVKADKIQRF.

The A20-type zinc-finger motif lies at 16 to 50; the sequence is ASEPKLCVKGCGFFGSPSNMDLCSKCYRGICAEEA. Zn(2+) contacts are provided by cysteine 22, cysteine 26, cysteine 38, cysteine 41, cysteine 117, cysteine 120, cysteine 131, cysteine 133, cysteine 138, histidine 141, histidine 147, and cysteine 149. The AN1-type zinc-finger motif lies at 111 to 157; it reads PARTNRCLCCNKKVGIMGFKCKCGSTFCGEHRYPETHDCSFDFKEVG.

May be involved in environmental stress response. This chain is Zinc finger A20 and AN1 domain-containing stress-associated protein 9 (SAP9), found in Arabidopsis thaliana (Mouse-ear cress).